Reading from the N-terminus, the 802-residue chain is Putative flavin carrier protein 3 (802 aa).

Residues 1–28 (MRFLQVYKSSALIGLIILLASKVNLAEA) form the signal peptide. The Lumenal portion of the chain corresponds to 29-169 (KRKLVATSLV…YFSNGKTVSQ (141 aa)). N149 is a glycosylation site (N-linked (GlcNAc...) asparagine). A helical membrane pass occupies residues 170–190 (IGVKWATAVVAGIGLLLSAIL). At 191 to 200 (STFGNSTAAS) the chain is on the cytoplasmic side. Residues 201 to 221 (HISANTMSLFLYFQSVVVVAM) traverse the membrane as a helical segment. Residues 222–229 (QHVHRVPP) are Lumenal-facing. The helical transmembrane segment at 230–250 (IAAAWAENLVWSMGLIRISFM) threads the bilayer. The Cytoplasmic portion of the chain corresponds to 251–255 (QRIFR). A helical membrane pass occupies residues 256–278 (WYVQSTGGTPSLYLTSTSMSVLA). Residues 279–323 (QRSWQYLMELPLIKRATNVLYGNANTLIFRGIKRLGYKMGIENTS) are Lumenal-facing. An N-linked (GlcNAc...) asparagine glycan is attached at N321. Residues 324–344 (IVCTGFTFFVLCGYVLAGFII) form a helical membrane-spanning segment. Residues 345 to 377 (VFKCCVELATRLGWIQKARFWEFRKQWRMILKG) are Cytoplasmic-facing. A helical membrane pass occupies residues 378-398 (ALLRYIYIGFVQLTILSFWEF). Topologically, residues 399–405 (TERDSPA) are lumenal. A helical membrane pass occupies residues 406–426 (VIVIACLFILLSCGLMLWAAW). At 427–467 (RTVFFARRSVALYNNPAALLYGDEYVLHKYGFFYTMFNANH) the chain is on the cytoplasmic side. A helical transmembrane segment spans residues 468–488 (YWWNIVLLSYIFVKSLLVGFA). Topologically, residues 489–495 (QASGQTQ) are lumenal. Residues 496-516 (VLFMFILDLFYFVAIIYYKPY) traverse the membrane as a helical segment. The Cytoplasmic segment spans residues 517-525 (LDRPTNIMN). The helical transmembrane segment at 526–546 (ILIATVTVVNSFLFMFFSDLF) threads the bilayer. N-linked (GlcNAc...) asparagine glycosylation occurs at N547. Over 547–557 (NQSYKVAAIMG) the chain is Lumenal. A helical membrane pass occupies residues 558–578 (WIFFIMNAAFSFILLMMILAF). Over 579–802 (AGMMLFSKNP…PPGFFDEGFM (224 aa)) the chain is Cytoplasmic. S616 and S635 each carry phosphoserine. The disordered stretch occupies residues 629-802 (KDHDDNSDYE…PPGFFDEGFM (174 aa)). Polar residues-rich tracts occupy residues 653-663 (DETTPTTVTSS), 697-717 (KQQT…STLG), and 761-788 (DTSS…NNKQ). 2 positions are modified to phosphoserine: S779 and S782.

It belongs to the transient receptor potential (TRP) ion channel family.

The protein localises to the endoplasmic reticulum membrane. May be responsible for the transport of FAD into the endoplasmic reticulum lumen, where it is required for oxidative protein folding. In Saccharomyces cerevisiae (strain ATCC 204508 / S288c) (Baker's yeast), this protein is Putative flavin carrier protein 3 (FLC3).